The primary structure comprises 283 residues: Pantothenate synthetase (283 aa).

31-38 is an ATP binding site; the sequence is MGALHDGH. The active-site Proton donor is the H38. Q62 lines the (R)-pantoate pocket. Position 62 (Q62) interacts with beta-alanine. An ATP-binding site is contributed by 148 to 151; it reads GKKD. Q154 lines the (R)-pantoate pocket. Residues V177 and 185-188 each bind ATP; that span reads KSSR.

It belongs to the pantothenate synthetase family. As to quaternary structure, homodimer.

The protein localises to the cytoplasm. The catalysed reaction is (R)-pantoate + beta-alanine + ATP = (R)-pantothenate + AMP + diphosphate + H(+). The protein operates within cofactor biosynthesis; (R)-pantothenate biosynthesis; (R)-pantothenate from (R)-pantoate and beta-alanine: step 1/1. Catalyzes the condensation of pantoate with beta-alanine in an ATP-dependent reaction via a pantoyl-adenylate intermediate. The protein is Pantothenate synthetase of Staphylococcus aureus (strain MRSA252).